Reading from the N-terminus, the 575-residue chain is Putative export ATP-binding/permease protein RBE_0492 (575 aa).

The ABC transmembrane type-1 domain maps to 20-303; it reads LIIVIISLLS…IFELLSEMHL (284 aa). Helical transmembrane passes span 21–41, 61–81, 135–155, 158–178, 242–262, and 277–297; these read IIVI…GNVF, ILYI…RSYF, FLSF…LMFF, FKLA…IIKF, ALFF…VIWI, and IISF…IFEL. The ABC transporter domain maps to 336 to 571; it reads LEFKNVNFSY…SDLYRTIYKE (236 aa). 371–378 lines the ATP pocket; that stretch reads GRSGSGKS.

This sequence belongs to the ABC transporter superfamily. In terms of assembly, homodimer.

The protein localises to the cell inner membrane. Part of an ABC transporter complex. Transmembrane domains (TMD) form a pore in the inner membrane and the ATP-binding domain (NBD) is responsible for energy generation. The sequence is that of Putative export ATP-binding/permease protein RBE_0492 from Rickettsia bellii (strain RML369-C).